The sequence spans 288 residues: 4-hydroxy-3-methylbut-2-enyl diphosphate reductase (288 aa).

Residue C13 coordinates [4Fe-4S] cluster. (2E)-4-hydroxy-3-methylbut-2-enyl diphosphate contacts are provided by H41 and H75. H41 and H75 together coordinate dimethylallyl diphosphate. Isopentenyl diphosphate-binding residues include H41 and H75. Residue C97 participates in [4Fe-4S] cluster binding. H130 is a binding site for (2E)-4-hydroxy-3-methylbut-2-enyl diphosphate. A dimethylallyl diphosphate-binding site is contributed by H130. An isopentenyl diphosphate-binding site is contributed by H130. E132 (proton donor) is an active-site residue. T168 is a (2E)-4-hydroxy-3-methylbut-2-enyl diphosphate binding site. C199 is a [4Fe-4S] cluster binding site. (2E)-4-hydroxy-3-methylbut-2-enyl diphosphate-binding residues include S227, S228, N229, and S271. Residues S227, S228, N229, and S271 each coordinate dimethylallyl diphosphate. Isopentenyl diphosphate is bound by residues S227, S228, N229, and S271.

This sequence belongs to the IspH family. It depends on [4Fe-4S] cluster as a cofactor.

The enzyme catalyses isopentenyl diphosphate + 2 oxidized [2Fe-2S]-[ferredoxin] + H2O = (2E)-4-hydroxy-3-methylbut-2-enyl diphosphate + 2 reduced [2Fe-2S]-[ferredoxin] + 2 H(+). It catalyses the reaction dimethylallyl diphosphate + 2 oxidized [2Fe-2S]-[ferredoxin] + H2O = (2E)-4-hydroxy-3-methylbut-2-enyl diphosphate + 2 reduced [2Fe-2S]-[ferredoxin] + 2 H(+). It functions in the pathway isoprenoid biosynthesis; dimethylallyl diphosphate biosynthesis; dimethylallyl diphosphate from (2E)-4-hydroxy-3-methylbutenyl diphosphate: step 1/1. It participates in isoprenoid biosynthesis; isopentenyl diphosphate biosynthesis via DXP pathway; isopentenyl diphosphate from 1-deoxy-D-xylulose 5-phosphate: step 6/6. Functionally, catalyzes the conversion of 1-hydroxy-2-methyl-2-(E)-butenyl 4-diphosphate (HMBPP) into a mixture of isopentenyl diphosphate (IPP) and dimethylallyl diphosphate (DMAPP). Acts in the terminal step of the DOXP/MEP pathway for isoprenoid precursor biosynthesis. In Phocaeicola vulgatus (strain ATCC 8482 / DSM 1447 / JCM 5826 / CCUG 4940 / NBRC 14291 / NCTC 11154) (Bacteroides vulgatus), this protein is 4-hydroxy-3-methylbut-2-enyl diphosphate reductase.